A 460-amino-acid chain; its full sequence is A-type ATP synthase subunit B (460 aa).

The protein belongs to the ATPase alpha/beta chains family. As to quaternary structure, has multiple subunits with at least A(3), B(3), C, D, E, F, H, I and proteolipid K(x).

It localises to the cell membrane. Functionally, component of the A-type ATP synthase that produces ATP from ADP in the presence of a proton gradient across the membrane. The B chain is a regulatory subunit. The chain is A-type ATP synthase subunit B from Thermoplasma volcanium (strain ATCC 51530 / DSM 4299 / JCM 9571 / NBRC 15438 / GSS1).